We begin with the raw amino-acid sequence, 451 residues long: Glutamyl-tRNA(Gln) amidotransferase subunit D (451 aa).

The interval 78-97 is disordered; the sequence is PREAPTPGEEEGSQEDFGQP. An Asparaginase/glutaminase domain is found at 99 to 432; the sequence is PRVFFVGTGG…EEIQRLFTAN (334 aa). Active-site residues include T109, T187, D188, and K266.

Belongs to the asparaginase 1 family. GatD subfamily. In terms of assembly, heterodimer of GatD and GatE.

The enzyme catalyses L-glutamyl-tRNA(Gln) + L-glutamine + ATP + H2O = L-glutaminyl-tRNA(Gln) + L-glutamate + ADP + phosphate + H(+). Its function is as follows. Allows the formation of correctly charged Gln-tRNA(Gln) through the transamidation of misacylated Glu-tRNA(Gln) in organisms which lack glutaminyl-tRNA synthetase. The reaction takes place in the presence of glutamine and ATP through an activated gamma-phospho-Glu-tRNA(Gln). The GatDE system is specific for glutamate and does not act on aspartate. The sequence is that of Glutamyl-tRNA(Gln) amidotransferase subunit D from Thermofilum pendens (strain DSM 2475 / Hrk 5).